Here is a 556-residue protein sequence, read N- to C-terminus: Formate--tetrahydrofolate ligase (556 aa).

Residue 65–72 (TPAGEGKT) participates in ATP binding.

The protein belongs to the formate--tetrahydrofolate ligase family.

The enzyme catalyses (6S)-5,6,7,8-tetrahydrofolate + formate + ATP = (6R)-10-formyltetrahydrofolate + ADP + phosphate. It functions in the pathway one-carbon metabolism; tetrahydrofolate interconversion. The protein is Formate--tetrahydrofolate ligase of Hyphomonas neptunium (strain ATCC 15444).